A 135-amino-acid chain; its full sequence is DNA-directed RNA polymerase subunit omega (135 aa).

The disordered stretch occupies residues 84–106 (IAGHSSHVSPSRSSRHTGLGKSF).

The protein belongs to the RNA polymerase subunit omega family. As to quaternary structure, the RNAP catalytic core consists of 2 alpha, 1 beta, 1 beta' and 1 omega subunit. When a sigma factor is associated with the core the holoenzyme is formed, which can initiate transcription.

The enzyme catalyses RNA(n) + a ribonucleoside 5'-triphosphate = RNA(n+1) + diphosphate. Promotes RNA polymerase assembly. Latches the N- and C-terminal regions of the beta' subunit thereby facilitating its interaction with the beta and alpha subunits. This chain is DNA-directed RNA polymerase subunit omega, found in Anaplasma phagocytophilum (strain HZ).